A 183-amino-acid chain; its full sequence is Ribulose bisphosphate carboxylase small subunit, chloroplastic 3 (183 aa).

The N-terminal 43 residues, 1-43 (MATTMLNRSVIVNKEVAKTPNFPRATKNNKGFASNAAVQKCRD), are a transit peptide targeting the chloroplast.

This sequence belongs to the RuBisCO small chain family. Heterohexadecamer of 8 large and 8 small subunits.

Its subcellular location is the plastid. It is found in the chloroplast. RuBisCO catalyzes two reactions: the carboxylation of D-ribulose 1,5-bisphosphate, the primary event in carbon dioxide fixation, as well as the oxidative fragmentation of the pentose substrate. Both reactions occur simultaneously and in competition at the same active site. Although the small subunit is not catalytic it is essential for maximal activity. The polypeptide is Ribulose bisphosphate carboxylase small subunit, chloroplastic 3 (Acetabularia peniculus (Green alga)).